We begin with the raw amino-acid sequence, 47 residues long: Photosystem II reaction center protein K (47 aa).

The propeptide occupies 1-10 (MAAFTLDLMA). Residues 20-40 (APAVDVLPLIPIFFFLLVFVW) traverse the membrane as a helical segment.

This sequence belongs to the PsbK family. As to quaternary structure, PSII is composed of 1 copy each of membrane proteins PsbA, PsbB, PsbC, PsbD, PsbE, PsbF, PsbH, PsbI, PsbJ, PsbK, PsbL, PsbM, PsbT, PsbX, PsbY, Psb30/Ycf12, peripheral proteins PsbO, CyanoQ (PsbQ), PsbU, PsbV and a large number of cofactors. It forms dimeric complexes.

It is found in the cellular thylakoid membrane. Its function is as follows. One of the components of the core complex of photosystem II (PSII). PSII is a light-driven water:plastoquinone oxidoreductase that uses light energy to abstract electrons from H(2)O, generating O(2) and a proton gradient subsequently used for ATP formation. It consists of a core antenna complex that captures photons, and an electron transfer chain that converts photonic excitation into a charge separation. The protein is Photosystem II reaction center protein K of Prochlorococcus marinus (strain MIT 9303).